The primary structure comprises 329 residues: Alternative oxidase, mitochondrial (329 aa).

The helical transmembrane segment at 115–135 (VISRCLFLETVAGVPGMVGGM) threads the bilayer. Fe cation contacts are provided by Glu-123, Glu-162, and His-165. A helical membrane pass occupies residues 181-201 (VSIIITQAIMYLFLLVAYVIS). Fe cation is bound by residues Glu-213, Glu-266, and His-269. The disordered stretch occupies residues 300-329 (EMYSNQPSGKTRTDFGSEGAKTASNVNKHV).

The protein belongs to the alternative oxidase family. Homodimer; disulfide-linked. Requires Fe cation as cofactor.

Its subcellular location is the mitochondrion inner membrane. Catalyzes cyanide-resistant oxygen consumption. May increase respiration when the cytochrome respiratory pathway is restricted, or in response to low temperatures. In Trypanosoma brucei brucei, this protein is Alternative oxidase, mitochondrial (AOX).